A 78-amino-acid chain; its full sequence is Small integral membrane protein 1 (78 aa).

At Met-1 the chain carries N-acetylmethionine. Residues 1-22 (MQSQESGVHYSRWDSSSRDEVS) are disordered. The Cytoplasmic portion of the chain corresponds to 1 to 48 (MQSQESGVHYSRWDSSSRDEVSMTAMSSSEEASCYRRISQKLCSGKLG). Phosphoserine is present on residues Ser-6, Ser-17, Ser-22, and Ser-27. Basic and acidic residues predominate over residues 11 to 21 (SRWDSSSRDEV). The chain crosses the membrane as a helical; Signal-anchor for type II membrane protein span at residues 49-69 (IAMKVLGGVALFWIIFILGYI). Topologically, residues 70–78 (TGYYVHKCK) are extracellular.

It belongs to the SMIM1 family. As to quaternary structure, homooligomer; disulfide-linked.

Its subcellular location is the cell membrane. In terms of biological role, regulator of red blood cell formation. The sequence is that of Small integral membrane protein 1 from Mus musculus (Mouse).